Here is a 394-residue protein sequence, read N- to C-terminus: Protein TsgA homolog (394 aa).

12 consecutive transmembrane segments (helical) span residues 11–31 (WISFFSYALTGAVVIVTGMVL), 51–71 (FLNAGILLAVFLNAWLMEIVP), 76–96 (LIFGFVLMVLAVLGLMNSHSL), 101–121 (LCMFVLGVVSGITMSIGTFLI), 135–155 (LFTDSFFSMAGTLFPIIAAAI), 163–183 (YWVYACIGVIYVAIFILALCF), 205–225 (LGVALLAVAALCYILGQLGFI), 245–265 (SVVGYFWTAYMIGMWAFSAIL), 273–293 (IVTALALASTLLMYWFINTTD), 299–319 (WIIMGLGFFSSAIYTTIITLG), 333–353 (FILTCGTIGTMLTFVVTGPIV), and 362–382 (LATTNSLYAVVFLMCLLLGFV).

This sequence belongs to the major facilitator superfamily. TsgA family.

Its subcellular location is the cell inner membrane. The sequence is that of Protein TsgA homolog from Erwinia tasmaniensis (strain DSM 17950 / CFBP 7177 / CIP 109463 / NCPPB 4357 / Et1/99).